The sequence spans 382 residues: Glutamate 5-kinase (382 aa).

ATP is bound at residue Lys15. The substrate site is built by Ser62, Asp149, and Asn161. 181–182 (TD) contacts ATP. The region spanning 288 to 366 (RGSVSVDAGA…VEIERLLGYS (79 aa)) is the PUA domain.

This sequence belongs to the glutamate 5-kinase family.

Its subcellular location is the cytoplasm. It catalyses the reaction L-glutamate + ATP = L-glutamyl 5-phosphate + ADP. It participates in amino-acid biosynthesis; L-proline biosynthesis; L-glutamate 5-semialdehyde from L-glutamate: step 1/2. Its function is as follows. Catalyzes the transfer of a phosphate group to glutamate to form L-glutamate 5-phosphate. This Delftia acidovorans (strain DSM 14801 / SPH-1) protein is Glutamate 5-kinase.